Consider the following 393-residue polypeptide: S-adenosylmethionine synthase (393 aa).

Histidine 16 contacts ATP. A Mg(2+)-binding site is contributed by aspartate 18. A K(+)-binding site is contributed by glutamate 44. Residues glutamate 57 and glutamine 100 each coordinate L-methionine. Positions 100-110 (QSNDIAQGVDQ) are flexible loop. Residues 167–169 (DAK), 238–239 (RF), aspartate 247, 253–254 (RK), alanine 270, and lysine 274 contribute to the ATP site. Aspartate 247 contacts L-methionine. Lysine 278 serves as a coordination point for L-methionine.

Belongs to the AdoMet synthase family. Homotetramer; dimer of dimers. It depends on Mg(2+) as a cofactor. The cofactor is K(+).

The protein resides in the cytoplasm. It catalyses the reaction L-methionine + ATP + H2O = S-adenosyl-L-methionine + phosphate + diphosphate. The protein operates within amino-acid biosynthesis; S-adenosyl-L-methionine biosynthesis; S-adenosyl-L-methionine from L-methionine: step 1/1. Its function is as follows. Catalyzes the formation of S-adenosylmethionine (AdoMet) from methionine and ATP. The overall synthetic reaction is composed of two sequential steps, AdoMet formation and the subsequent tripolyphosphate hydrolysis which occurs prior to release of AdoMet from the enzyme. The sequence is that of S-adenosylmethionine synthase from Methylibium petroleiphilum (strain ATCC BAA-1232 / LMG 22953 / PM1).